The following is a 346-amino-acid chain: Methylthioribose-1-phosphate isomerase (346 aa).

Substrate contacts are provided by residues 44-46 (RGA), Arg-87, and Gln-194. The active-site Proton donor is the Asp-235. 245–246 (NK) contacts substrate.

Belongs to the eIF-2B alpha/beta/delta subunits family. MtnA subfamily.

The enzyme catalyses 5-(methylsulfanyl)-alpha-D-ribose 1-phosphate = 5-(methylsulfanyl)-D-ribulose 1-phosphate. It participates in amino-acid biosynthesis; L-methionine biosynthesis via salvage pathway; L-methionine from S-methyl-5-thio-alpha-D-ribose 1-phosphate: step 1/6. In terms of biological role, catalyzes the interconversion of methylthioribose-1-phosphate (MTR-1-P) into methylthioribulose-1-phosphate (MTRu-1-P). The chain is Methylthioribose-1-phosphate isomerase from Desulforamulus reducens (strain ATCC BAA-1160 / DSM 100696 / MI-1) (Desulfotomaculum reducens).